Consider the following 294-residue polypeptide: MHPRFQTAFAQLADNLQSALAPILANHHFPAMLTAEQVSTLKNTAGLDEDALAFALLPLAAACARTDLSHFNVGAIARGVSGNWYFGANMEFLGATMQQTVHAEQSAISHAWLRGEKGLAAVTVNYTPCGHCRQFMNELNSGLDLRIHLPGRAPHTLRDYLPDAFGPKDLEIKTLLMDEQDHGFTLTGDTLTQAAITAANKSHMPYSHSPSGVALECKDGRIFTGSYAENAAFNPTLPPLQGALNLLSLNGYDYADIQRAILAEKGDAALIQWDATAATLKALGCHNIDRVLLG.

2 consecutive CMP/dCMP-type deaminase domains span residues 48-168 (DEDA…FGPK) and 186-294 (LTGD…VLLG). 89–91 (NME) contacts substrate. Zn(2+) is bound at residue H102. The active-site Proton donor is E104. C129 and C132 together coordinate Zn(2+).

The protein belongs to the cytidine and deoxycytidylate deaminase family. In terms of assembly, homodimer. Zn(2+) is required as a cofactor.

The catalysed reaction is cytidine + H2O + H(+) = uridine + NH4(+). The enzyme catalyses 2'-deoxycytidine + H2O + H(+) = 2'-deoxyuridine + NH4(+). In terms of biological role, this enzyme scavenges exogenous and endogenous cytidine and 2'-deoxycytidine for UMP synthesis. The sequence is that of Cytidine deaminase from Salmonella newport (strain SL254).